The primary structure comprises 485 residues: Glutamate--tRNA ligase (485 aa).

Residues 12-22 carry the 'HIGH' region motif; the sequence is PSPTGEPHVGT. The short motif at 253–257 is the 'KMSKS' region element; the sequence is KLSKR. K256 is a binding site for ATP.

The protein belongs to the class-I aminoacyl-tRNA synthetase family. Glutamate--tRNA ligase type 1 subfamily. Monomer.

Its subcellular location is the cytoplasm. The catalysed reaction is tRNA(Glu) + L-glutamate + ATP = L-glutamyl-tRNA(Glu) + AMP + diphosphate. Its function is as follows. Catalyzes the attachment of glutamate to tRNA(Glu) in a two-step reaction: glutamate is first activated by ATP to form Glu-AMP and then transferred to the acceptor end of tRNA(Glu). The protein is Glutamate--tRNA ligase of Rhizobium meliloti (strain 1021) (Ensifer meliloti).